Reading from the N-terminus, the 444-residue chain is Glutamate--tRNA ligase 1 (444 aa).

A 'HIGH' region motif is present at residues 10 to 20; it reads PSPTGRLHLGN. The 'KMSKS' region motif lies at 241–245; it reads GLSKR. Residue Lys-244 participates in ATP binding.

This sequence belongs to the class-I aminoacyl-tRNA synthetase family. Glutamate--tRNA ligase type 1 subfamily. Monomer.

The protein resides in the cytoplasm. It carries out the reaction tRNA(Glu) + L-glutamate + ATP = L-glutamyl-tRNA(Glu) + AMP + diphosphate. Functionally, catalyzes the attachment of glutamate to tRNA(Glu) in a two-step reaction: glutamate is first activated by ATP to form Glu-AMP and then transferred to the acceptor end of tRNA(Glu). The chain is Glutamate--tRNA ligase 1 from Rhodospirillum rubrum (strain ATCC 11170 / ATH 1.1.1 / DSM 467 / LMG 4362 / NCIMB 8255 / S1).